The following is a 276-amino-acid chain: Adenylate kinase (276 aa).

ATP is bound at residue 51–56; sequence GAGKGT. The segment at 71–100 is NMP; the sequence is ATGDMLRSQVAKKTPLGQAAKKIMDAGGLV. AMP contacts are provided by residues T72, R77, 98 to 100, 127 to 130, and Q134; these read GLV and GFPR. An LID region spans residues 168 to 205; it reads GRLVHPASGRSYHVKFNPPKKEMTDDITGEPLIQRSDD. ATP-binding positions include R169 and 178-179; that span reads SY. 2 residues coordinate AMP: R202 and R213. Q241 provides a ligand contact to ATP.

This sequence belongs to the adenylate kinase family. AK2 subfamily. Monomer.

It is found in the cytoplasm. The protein localises to the cytosol. The protein resides in the mitochondrion intermembrane space. It catalyses the reaction AMP + ATP = 2 ADP. Catalyzes the reversible transfer of the terminal phosphate group between ATP and AMP. Plays an important role in cellular energy homeostasis and in adenine nucleotide metabolism. Adenylate kinase activity is critical for regulation of the phosphate utilization and the AMP de novo biosynthesis pathways. The sequence is that of Adenylate kinase from Podospora anserina (strain S / ATCC MYA-4624 / DSM 980 / FGSC 10383) (Pleurage anserina).